Here is a 73-residue protein sequence, read N- to C-terminus: Cell division protein ZapB (73 aa).

The stretch at 3–67 (LELLSKLETK…WNDKVTGLVG (65 aa)) forms a coiled coil.

It belongs to the ZapB family. As to quaternary structure, homodimer. The ends of the coiled-coil dimer bind to each other, forming polymers. Interacts with FtsZ.

The protein localises to the cytoplasm. Non-essential, abundant cell division factor that is required for proper Z-ring formation. It is recruited early to the divisome by direct interaction with FtsZ, stimulating Z-ring assembly and thereby promoting cell division earlier in the cell cycle. Its recruitment to the Z-ring requires functional FtsA or ZipA. The sequence is that of Cell division protein ZapB from Shewanella sp. (strain MR-4).